The primary structure comprises 91 residues: Small membrane A-kinase anchor protein (91 aa).

The N-myristoyl glycine moiety is linked to residue G2.

It belongs to the small membrane AKAP family. May be palmitoylated at Cys-3.

It is found in the cell membrane. In terms of biological role, binds to type I regulatory subunits of protein kinase A and may anchor/target them to the plasma membrane. This is Small membrane A-kinase anchor protein from Xenopus tropicalis (Western clawed frog).